A 284-amino-acid polypeptide reads, in one-letter code: Large ribosomal subunit protein uL2 (284 aa).

Disordered regions lie at residues 28–50 and 232–284; these read ELKGSSSRRSVRPNKKLSFFKKS and RGTA…DRRK. A compositionally biased stretch (basic residues) spans 36 to 46; it reads RSVRPNKKLSF. Residues 240-250 show a composition bias toward basic and acidic residues; that stretch reads DHPHGGGEGRH. Positions 264 to 284 are enriched in basic residues; that stretch reads KGLKTRDKRKSNKWIVKDRRK.

The protein belongs to the universal ribosomal protein uL2 family. As to quaternary structure, part of the 50S ribosomal subunit. Forms a bridge to the 30S subunit in the 70S ribosome.

Functionally, one of the primary rRNA binding proteins. Required for association of the 30S and 50S subunits to form the 70S ribosome, for tRNA binding and peptide bond formation. It has been suggested to have peptidyltransferase activity; this is somewhat controversial. Makes several contacts with the 16S rRNA in the 70S ribosome. The polypeptide is Large ribosomal subunit protein uL2 (Chlamydia trachomatis serovar L2 (strain ATCC VR-902B / DSM 19102 / 434/Bu)).